The sequence spans 166 residues: NAD(P)H-quinone oxidoreductase subunit I, chloroplastic (166 aa).

2 consecutive 4Fe-4S ferredoxin-type domains span residues 55 to 84 and 95 to 124; these read GRIHFEFDKCIACEVCVRVCPIDLPVVDWK and LNYSIDFGICIFCGNCVEYCPTNCLSMTEE. [4Fe-4S] cluster is bound by residues C64, C67, C70, C74, C104, C107, C110, and C114.

Belongs to the complex I 23 kDa subunit family. In terms of assembly, NDH is composed of at least 16 different subunits, 5 of which are encoded in the nucleus. Requires [4Fe-4S] cluster as cofactor.

The protein localises to the plastid. It localises to the chloroplast thylakoid membrane. The catalysed reaction is a plastoquinone + NADH + (n+1) H(+)(in) = a plastoquinol + NAD(+) + n H(+)(out). It carries out the reaction a plastoquinone + NADPH + (n+1) H(+)(in) = a plastoquinol + NADP(+) + n H(+)(out). Its function is as follows. NDH shuttles electrons from NAD(P)H:plastoquinone, via FMN and iron-sulfur (Fe-S) centers, to quinones in the photosynthetic chain and possibly in a chloroplast respiratory chain. The immediate electron acceptor for the enzyme in this species is believed to be plastoquinone. Couples the redox reaction to proton translocation, and thus conserves the redox energy in a proton gradient. The chain is NAD(P)H-quinone oxidoreductase subunit I, chloroplastic from Laphamia lindheimeri (Lindheimer's rockdaisy).